The sequence spans 62 residues: Large ribosomal subunit protein bL28 (62 aa).

Belongs to the bacterial ribosomal protein bL28 family.

The polypeptide is Large ribosomal subunit protein bL28 (Desulforamulus reducens (strain ATCC BAA-1160 / DSM 100696 / MI-1) (Desulfotomaculum reducens)).